The primary structure comprises 447 residues: MNKNTWVIGFTLFAMFFGAGNLIFPPNLGLDSGQFFWPAILAFVLTGIGLPLLGVIVGALDKEGYIGALNKISPKFSILFLIIIYLTIGPLFAIPRTASTSFEMTITPIIHSNSSIALFIFTIIYFIVVLYICLNPSKLIDRIGSLLTPLLLITILAMIIKGYLDFSGNSAGKGNEALYHSNFSSFAEGFTQGYLTMDAIAAIAFSMIVVNAVKLTGITKTNQIFKQTLTAGLIAAVALIFIYISLGYIGNHMPVSDMTLDQLKSKDRNIGTYLLTTMASTGFGSFGKYLLGIIVALACLTTACGLIVAVSEYFHRIVPKVSYKAFVLVFILMSFIIANQGLNAVISMSIPVLSIVYPVAITVVLLILIAKFIPTKRISQQIPVIIVFILSIFSVISKLGWLKINFIESLPLRAYSLEWFPVAIIATILGYLVGIFVKQDPIKYQQE.

Transmembrane regions (helical) follow at residues 6-26 (WVIG…IFPP), 40-60 (ILAF…VGAL), 74-94 (PKFS…LFAI), 114-134 (SSIA…YICL), 143-163 (IGSL…IKGY), 193-213 (GYLT…VNAV), 229-249 (LTAG…LGYI), 290-310 (LLGI…IVAV), 326-346 (FVLV…NAVI), 350-370 (IPVL…ILIA), 382-402 (IPVI…LGWL), and 417-437 (LEWF…GIFV).

This sequence belongs to the branched chain amino acid transporter family.

It localises to the cell membrane. Functionally, component of the transport system for branched-chain amino acids (leucine, isoleucine and valine), which is coupled to a proton motive force (Potential). Contributes to NaCl tolerance. The chain is Putative branched-chain amino acid carrier protein SAUSA300_1300 from Staphylococcus aureus (strain USA300).